A 28-amino-acid chain; its full sequence is Conotoxin Cal6.43b (28 aa).

Cystine bridges form between cysteine 3-cysteine 13, cysteine 7-cysteine 19, and cysteine 12-cysteine 25.

As to expression, expressed by the venom duct.

Its subcellular location is the secreted. In terms of biological role, probable neurotoxin with unknown target. Possibly targets ion channels. This Californiconus californicus (California cone) protein is Conotoxin Cal6.43b.